We begin with the raw amino-acid sequence, 764 residues long: Probable 5-methyltetrahydropteroyltriglutamate--homocysteine methyltransferase (764 aa).

2 residues coordinate 5-methyltetrahydropteroyltri-L-glutamate: Lys19 and Asn126. Ser182 carries the post-translational modification Phosphoserine. Thr441 is modified (phosphothreonine). Residues 442–444 (IGS) and Glu495 contribute to the L-homocysteine site. L-methionine-binding positions include 442 to 444 (IGS) and Glu495. 5-methyltetrahydropteroyltri-L-glutamate is bound by residues Asp500, Tyr523, 526–527 (RC), and Trp572. Asp610 is an L-homocysteine binding site. L-methionine is bound at residue Asp610. 3 residues coordinate Zn(2+): His652, Cys654, and Glu676. His703 serves as the catalytic Proton donor. Zn(2+) is bound at residue Cys735.

It belongs to the vitamin-B12 independent methionine synthase family. Zn(2+) is required as a cofactor.

Its subcellular location is the nucleus. The protein resides in the cytoplasm. The enzyme catalyses 5-methyltetrahydropteroyltri-L-glutamate + L-homocysteine = tetrahydropteroyltri-L-glutamate + L-methionine. The protein operates within amino-acid biosynthesis; L-methionine biosynthesis via de novo pathway; L-methionine from L-homocysteine (MetE route): step 1/1. Functionally, catalyzes the transfer of a methyl group from 5-methyltetrahydrofolate to homocysteine resulting in methionine formation. The chain is Probable 5-methyltetrahydropteroyltriglutamate--homocysteine methyltransferase (met26) from Schizosaccharomyces pombe (strain 972 / ATCC 24843) (Fission yeast).